We begin with the raw amino-acid sequence, 366 residues long: Transcription factor bHLH74 (366 aa).

The segment covering 1-11 has biased composition (gly residues); it reads MGGESNEGGEM. 2 disordered regions span residues 1-20 and 123-201; these read MGGE…DDES and GESS…APKE. Composition is skewed to basic and acidic residues over residues 123-134 and 159-170; these read GESSHEDHHQVS and KAVEEFQEDPQR. Residues 212–262 enclose the bHLH domain; sequence QATNSHSLAERVRREKISERMRLLQELVPGCNKITGKAVMLDEIINYVQSL.

As to quaternary structure, homodimer. Interacts with IBH1. Binds reversibly to CRY2 after blue light illumination. In terms of tissue distribution, expressed constitutively in roots, leaves, stems, and flowers.

It localises to the nucleus. In terms of biological role, transcriptional activator involved in cell elongation. Regulates the expression of a subset of genes involved in cell expansion by binding to the G-box motif. Binds to chromatin DNA of the FT gene and promotes its expression, and thus triggers flowering in response to blue light. In Arabidopsis thaliana (Mouse-ear cress), this protein is Transcription factor bHLH74 (BHLH74).